Consider the following 357-residue polypeptide: Guanine nucleotide-binding protein alpha-16 subunit (357 aa).

Gly-2 carries the N-myristoyl glycine lipid modification. Residue Cys-3 is the site of S-palmitoyl cysteine attachment. The region spanning 32–357 (RTIKLLLLGA…RDNLRTCGLY (326 aa)) is the G-alpha domain. The interval 35–48 (KLLLLGAGESGKST) is G1 motif. Residues 40–47 (GAGESGKS), 175–181 (LRTRIKT), 200–204 (DVGGQ), 269–272 (NKKD), and Ala-329 each bind GTP. Residues Ser-47 and Thr-181 each coordinate Mg(2+). The tract at residues 173–181 (DILRTRIKT) is G2 motif. Residues 196–205 (FLVFDVGGQR) are G3 motif. The G4 motif stretch occupies residues 265–272 (ILFLNKKD). The segment at 327-332 (TCATDT) is G5 motif.

The protein belongs to the G-alpha family. G proteins are composed of 3 units; alpha, beta and gamma. The alpha chain contains the guanine nucleotide binding site.

Functionally, guanine nucleotide-binding proteins (G proteins) are involved as modulators or transducers in various transmembrane signaling systems. In the 1-cell embryo, probably together with goa-1, controls nuclear rotation and spindle elongation during mitosis. During the first embryonic cell divisons, plays a role in gpr-1/2 cortical localization and in the proper orientation of EMS blastomere mitotic spindle. The chain is Guanine nucleotide-binding protein alpha-16 subunit (gpa-16) from Caenorhabditis elegans.